The chain runs to 438 residues: MINKKKLVTSLVTSSLLATFTLGSFADAHTYIINNEDINKNAQESSIGTLKQNNFKQSTIDSMKPRNLQSFQEDKVFKAPKEKTPITERARKSENALSNSKLNDVRSFTTVNMRTNENERTAAKLKYNGKNTNVWVADNYITDKQAKNIGEEFDNKIDPLVKEKFGEPSDVDHDGKVNILVYDIKDDFETTGSYTGGYFHPRDLYDVPHSNKAEVFYMDTYPSMGTDKNNLNEKKVYSTLAHEYQHMVNANQKLLKEQKEDGMDVWLDEAFAMASEHMYLQKPLDHRIEYYNNSTSIANGHSLIKWNHRGDVLSNYALSYLFSQYLSAQSDNGDKIFKEILQDPANTSEALENAIHKHVDPKMSLGEFMTNFRVALEKKEATGLHGFNGAPGLNSISPKPVRELPQTLAPQGSVMFETTSPIKVPKDKDEKVNYVKVK.

Residues 1-26 form the signal peptide; sequence MINKKKLVTSLVTSSLLATFTLGSFA. A propeptide spanning residues 27–101 is cleaved from the precursor; that stretch reads DAHTYIINNE…KSENALSNSK (75 aa). His-242 is a Zn(2+) binding site. Residue Glu-243 is part of the active site. His-246 and Glu-269 together coordinate Zn(2+).

It belongs to the peptidase M30 family. Requires Zn(2+) as cofactor. In terms of processing, several different N-terminal ends may be produced, the favored N-terminus is position 102.

It is found in the secreted. Its activity is regulated as follows. Inhibited by metal- and zinc-specific inhibitors, such as EDTA and 1,10-phenanthroline in vitro. Is resistant to all inhibitors of serine, cysteine and aspartic proteases. Its function is as follows. Protease that has a low substrate specificity. Catalyzes the hydrolysis of glucagon, melittin and oxidized beta-insulin at various positions in vitro. Is not able to cleave elastin or the synthetic substrates FAGLA (a substrate for neutral proteinases) and FALGPA (a substrate for collagenase). The protein is Neutral metalloprotease ShpI of Staphylococcus hyicus.